A 969-amino-acid polypeptide reads, in one-letter code: Probable Rho-type GTPase-activating protein 3 (969 aa).

2 consecutive LIM zinc-binding domains span residues 17-81 (TVCF…CTAC) and 76-135 (HTCT…RHPS). Disordered regions lie at residues 170 to 223 (IEIM…ADSL), 348 to 459 (ATSP…VEEL), and 613 to 646 (TSSK…SPNL). Residues 193 to 202 (ETPTNMSQAE) are compositionally biased toward polar residues. Low complexity-rich tracts occupy residues 212-223 (DSNLASNSADSL) and 350-361 (SPFRPFSPSYRS). Composition is skewed to polar residues over residues 369-392 (TRSP…SFAQ) and 418-432 (LSET…SLGS). The segment covering 450-459 (SERDSDVEEL) has biased composition (basic and acidic residues). A compositionally biased stretch (low complexity) spans 613-623 (TSSKNTTSSIN). Over residues 624-637 (PLTAVSSNSGQSSG) the composition is skewed to polar residues. The segment at 697 to 744 (DHVFHVNAIFKPSRCYICSESVWGSELRCFHCSISCHSRCLKRLFAES) adopts a Phorbol-ester/DAG-type zinc-finger fold. Residues 780-966 (RSLENQLKIE…FMLDNVDKIL (187 aa)) enclose the Rho-GAP domain.

In terms of assembly, interacts with dil1.

It is found in the cell tip. Functionally, GTPase-activating protein for Rho-type proteins. The chain is Probable Rho-type GTPase-activating protein 3 (rga3) from Schizosaccharomyces pombe (strain 972 / ATCC 24843) (Fission yeast).